Reading from the N-terminus, the 161-residue chain is Allophycocyanin beta chain (161 aa).

N71 bears the N4-methylasparagine mark. C81 is a (2R,3E)-phycocyanobilin binding site.

Belongs to the phycobiliprotein family. In terms of assembly, heterodimer of an alpha and a beta chain. Post-translationally, contains one covalently linked phycocyanobilin chromophore.

The protein localises to the cellular thylakoid membrane. Functionally, light-harvesting photosynthetic bile pigment-protein from the phycobiliprotein complex. Allophycocyanin has a maximum absorption at approximately 650 nanometers. This is Allophycocyanin beta chain (apcB) from Arthrospira platensis (Spirulina platensis).